The following is a 292-amino-acid chain: Ribosomal protein L11 methyltransferase (292 aa).

S-adenosyl-L-methionine contacts are provided by Thr-143, Gly-164, Asp-186, and Asn-228.

The protein belongs to the methyltransferase superfamily. PrmA family.

The protein resides in the cytoplasm. It carries out the reaction L-lysyl-[protein] + 3 S-adenosyl-L-methionine = N(6),N(6),N(6)-trimethyl-L-lysyl-[protein] + 3 S-adenosyl-L-homocysteine + 3 H(+). In terms of biological role, methylates ribosomal protein L11. The chain is Ribosomal protein L11 methyltransferase from Aeromonas hydrophila subsp. hydrophila (strain ATCC 7966 / DSM 30187 / BCRC 13018 / CCUG 14551 / JCM 1027 / KCTC 2358 / NCIMB 9240 / NCTC 8049).